Reading from the N-terminus, the 261-residue chain is MVVLSVPAEVTVILLDIEGTTTPIAFVKDILFPYVKENVEEYLQAHWEEEECQQDVRLLRKQAEEDSHLDGAVPIPAASGNGADDPQWMIQAVVDNVYWQMSLDRKTTALKQLQGHMWRAAFKAGHMKAEFFEDVVPAVRKWREAGMKVYVYSSGSVEAQKLLFGHSTEGDILELVDGHFDTKIGHKVESESYQKIASSIGCSTNNILFLTDVSREASAAEEAGVHVAVVVRPGNAGLTDDEKTHFSLITSFSELYLPSST.

Mg(2+) contacts are provided by Asp-16 and Glu-18. Substrate is bound by residues 153-154 and Lys-187; that span reads SS. Asp-212 contributes to the Mg(2+) binding site.

The protein belongs to the HAD-like hydrolase superfamily. MasA/MtnC family. In terms of assembly, monomer. It depends on Mg(2+) as a cofactor.

Its subcellular location is the cytoplasm. It is found in the nucleus. The catalysed reaction is 5-methylsulfanyl-2,3-dioxopentyl phosphate + H2O = 1,2-dihydroxy-5-(methylsulfanyl)pent-1-en-3-one + phosphate. The protein operates within amino-acid biosynthesis; L-methionine biosynthesis via salvage pathway; L-methionine from S-methyl-5-thio-alpha-D-ribose 1-phosphate: step 3/6. It functions in the pathway amino-acid biosynthesis; L-methionine biosynthesis via salvage pathway; L-methionine from S-methyl-5-thio-alpha-D-ribose 1-phosphate: step 4/6. In terms of biological role, bifunctional enzyme that catalyzes the enolization of 2,3-diketo-5-methylthiopentyl-1-phosphate (DK-MTP-1-P) into the intermediate 2-hydroxy-3-keto-5-methylthiopentenyl-1-phosphate (HK-MTPenyl-1-P), which is then dephosphorylated to form the acireductone 1,2-dihydroxy-3-keto-5-methylthiopentene (DHK-MTPene). This Bos taurus (Bovine) protein is Enolase-phosphatase E1.